The primary structure comprises 252 residues: Probable oligoribonuclease (252 aa).

An Exonuclease domain is found at 81–241 (VWIDCEMTGL…ALSDILESIG (161 aa)). The active site involves Tyr202.

The protein belongs to the oligoribonuclease family.

The protein localises to the cytoplasm. It localises to the nucleus. In terms of biological role, 3'-to-5' exoribonuclease specific for small oligoribonucleotides. This is Probable oligoribonuclease (rex2) from Schizosaccharomyces pombe (strain 972 / ATCC 24843) (Fission yeast).